The following is a 180-amino-acid chain: ATP-dependent protease subunit HslV (180 aa).

Thr5 is an active-site residue. Na(+) contacts are provided by Gly161, Cys164, and Thr167.

It belongs to the peptidase T1B family. HslV subfamily. In terms of assembly, a double ring-shaped homohexamer of HslV is capped on each side by a ring-shaped HslU homohexamer. The assembly of the HslU/HslV complex is dependent on binding of ATP.

The protein resides in the cytoplasm. It carries out the reaction ATP-dependent cleavage of peptide bonds with broad specificity.. With respect to regulation, allosterically activated by HslU binding. Its function is as follows. Protease subunit of a proteasome-like degradation complex believed to be a general protein degrading machinery. The protein is ATP-dependent protease subunit HslV of Campylobacter jejuni subsp. jejuni serotype O:6 (strain 81116 / NCTC 11828).